We begin with the raw amino-acid sequence, 229 residues long: 7-cyano-7-deazaguanine synthase (229 aa).

Residue 8 to 18 (CSGGLDSSVIA) coordinates ATP. Residues cysteine 190, cysteine 203, cysteine 206, and cysteine 209 each contribute to the Zn(2+) site.

It belongs to the QueC family. It depends on Zn(2+) as a cofactor.

It catalyses the reaction 7-carboxy-7-deazaguanine + NH4(+) + ATP = 7-cyano-7-deazaguanine + ADP + phosphate + H2O + H(+). The protein operates within purine metabolism; 7-cyano-7-deazaguanine biosynthesis. Functionally, catalyzes the ATP-dependent conversion of 7-carboxy-7-deazaguanine (CDG) to 7-cyano-7-deazaguanine (preQ(0)). This chain is 7-cyano-7-deazaguanine synthase, found in Methanopyrus kandleri (strain AV19 / DSM 6324 / JCM 9639 / NBRC 100938).